Reading from the N-terminus, the 671-residue chain is Carbohydrate acetyl esterase/feruloyl esterase (671 aa).

Residues 1-24 form the signal peptide; that stretch reads MYQSTLKTILLASALLILPASMSA. The segment at 1–296 is carbohydrate acetyl esterase; that stretch reads MYQSTLKTIL…YGEAVARHLG (296 aa). Residues Ser55, Asp271, and His274 each act as for acetyl esterase activity in the active site. The segment at 297-671 is feruloyl esterase; it reads YEPKRPYIEM…NEFIPHLFKK (375 aa).

In the N-terminal section; belongs to the carbohydrate esterase 6 family.

It carries out the reaction feruloyl-polysaccharide + H2O = ferulate + polysaccharide.. Its pathway is glycan degradation; xylan degradation. Involved in degradation of plant cell wall polysaccharides. Bifunctional esterase that possesses both acetyl esterase and ferulic acid esterase activities. Has deacetylase activity towards acetylated xylo-oligosaccharides smaller than xylo-heptaose, as well as from glucose-pentaacetate. Is also able to release ferulic acid from methylferulate, and from the more natural substrates wheat bran, corn fiber, and XOS(FA,Ac), a corn fiber-derived substrate enriched in O-acetyl and ferulic acid esters. The polypeptide is Carbohydrate acetyl esterase/feruloyl esterase (Xylanibacter ruminicola (strain ATCC 19189 / DSM 19721 / CIP 105475 / JCM 8958 / 23) (Prevotella ruminicola)).